We begin with the raw amino-acid sequence, 577 residues long: MHWLRKVQGLCTLWGTQMSSRTLYINSRQLVSLQWGHQEVPAKFNFASDVLDHWADMEKAGKRLPSPALWWVNGKGKELMWNFRELSENSQQAANILSGACGLQRGDRVAVMLPRVPEWWLVILGCIRAGLIFMPGTIQMKSTDILYRLQMSKAKAIVAGDEVIQEVDTVASECPSLRIKLLVSEKSCDGWLNFKKLLNEASTTHHCVETGSQEASAIYFTSGTSGLPKMAEHSYSSLGLKAKMDAGWTGLQASDIMWTISDTGWILNILGSLLESWTLGACTFVHLLPKFDPLVILKTLSSYPIKSMMGAPIVYRMLLQQDLSSYKFPHLQNCLAGGESLLPETLENWRAQTGLDIREFYGQTETGLTCMVSKTMKIKPGYMGTAASCYDVQVIDDKGNVLPPGTEGDIGIRVKPIRPIGIFSGYVENPDKTAANIRGDFWLLGDRGIKDEDGYFQFMGRADDIINSSGYRIGPSEVENALMKHPAVVETAVISSPDPVRGEVVKAFVILASQFLSHDPEQLTKELQQHVKSVTAPYKYPRKIEFVLNLPKTVTGKIQRTKLRDKEWKMSGKARAQ.

The N-terminal 46 residues, 1 to 46 (MHWLRKVQGLCTLWGTQMSSRTLYINSRQLVSLQWGHQEVPAKFNF), are a transit peptide targeting the mitochondrion. Glutamine 139 contributes to the CoA binding site. Residues 221 to 229 (TSGTSGLPK), 359 to 364 (EFYGQT), aspartate 446, and arginine 461 contribute to the ATP site. Threonine 364 contacts substrate. Position 469 to 471 (469 to 471 (SGY)) interacts with CoA. Substrate is bound at residue arginine 472. Arginine 501 is a binding site for CoA. Serine 513 carries the phosphoserine modification. CoA-binding positions include lysine 532 and 540 to 542 (YPR). Lysine 557 serves as a coordination point for ATP.

Belongs to the ATP-dependent AMP-binding enzyme family. Monomer. Mg(2+) is required as a cofactor. The cofactor is Mn(2+). As to expression, detected in liver.

The protein resides in the mitochondrion. The catalysed reaction is a medium-chain fatty acid + ATP + CoA = a medium-chain fatty acyl-CoA + AMP + diphosphate. It catalyses the reaction benzoate + ATP + CoA = benzoyl-CoA + AMP + diphosphate. It carries out the reaction hexanoate + ATP + CoA = hexanoyl-CoA + AMP + diphosphate. The enzyme catalyses butanoate + ATP + CoA = butanoyl-CoA + AMP + diphosphate. The catalysed reaction is octanoate + ATP + CoA = octanoyl-CoA + AMP + diphosphate. It catalyses the reaction decanoate + ATP + CoA = decanoyl-CoA + AMP + diphosphate. With respect to regulation, activated by monovalent cations, such as potassium, rubidium or ammonium. Functionally, catalyzes the activation of fatty acids by CoA to produce an acyl-CoA, the first step in fatty acid metabolism. Capable of activating medium-chain fatty acids (e.g. butyric (C4) to decanoic (C10) acids), and certain carboxylate-containing xenobiotics, e.g. benzoate. This chain is Acyl-coenzyme A synthetase ACSM2B, mitochondrial (ACSM2B), found in Homo sapiens (Human).